A 443-amino-acid polypeptide reads, in one-letter code: tRNA-2-methylthio-N(6)-dimethylallyladenosine synthase (443 aa).

An MTTase N-terminal domain is found at Met-1–Gln-114. Cys-10, Cys-46, Cys-79, Cys-150, Cys-154, and Cys-157 together coordinate [4Fe-4S] cluster. One can recognise a Radical SAM core domain in the interval Arg-136–Lys-367. The TRAM domain maps to Glu-370 to Trp-431.

The protein belongs to the methylthiotransferase family. MiaB subfamily. Monomer. [4Fe-4S] cluster serves as cofactor.

It localises to the cytoplasm. The catalysed reaction is N(6)-dimethylallyladenosine(37) in tRNA + (sulfur carrier)-SH + AH2 + 2 S-adenosyl-L-methionine = 2-methylsulfanyl-N(6)-dimethylallyladenosine(37) in tRNA + (sulfur carrier)-H + 5'-deoxyadenosine + L-methionine + A + S-adenosyl-L-homocysteine + 2 H(+). Its function is as follows. Catalyzes the methylthiolation of N6-(dimethylallyl)adenosine (i(6)A), leading to the formation of 2-methylthio-N6-(dimethylallyl)adenosine (ms(2)i(6)A) at position 37 in tRNAs that read codons beginning with uridine. This chain is tRNA-2-methylthio-N(6)-dimethylallyladenosine synthase, found in Thermotoga sp. (strain RQ2).